We begin with the raw amino-acid sequence, 309 residues long: Aspartate carbamoyltransferase catalytic subunit (309 aa).

Residues R58 and T59 each contribute to the carbamoyl phosphate site. L-aspartate is bound at residue K87. Positions 108, 136, and 139 each coordinate carbamoyl phosphate. Residues R168 and R229 each coordinate L-aspartate. Carbamoyl phosphate contacts are provided by L268 and P269.

It belongs to the aspartate/ornithine carbamoyltransferase superfamily. ATCase family. In terms of assembly, heterooligomer of catalytic and regulatory chains.

The enzyme catalyses carbamoyl phosphate + L-aspartate = N-carbamoyl-L-aspartate + phosphate + H(+). It functions in the pathway pyrimidine metabolism; UMP biosynthesis via de novo pathway; (S)-dihydroorotate from bicarbonate: step 2/3. Catalyzes the condensation of carbamoyl phosphate and aspartate to form carbamoyl aspartate and inorganic phosphate, the committed step in the de novo pyrimidine nucleotide biosynthesis pathway. The sequence is that of Aspartate carbamoyltransferase catalytic subunit from Methanosarcina mazei (strain ATCC BAA-159 / DSM 3647 / Goe1 / Go1 / JCM 11833 / OCM 88) (Methanosarcina frisia).